A 494-amino-acid polypeptide reads, in one-letter code: Glycerol kinase 1 (494 aa).

Thr-12 provides a ligand contact to ADP. The ATP site is built by Thr-12, Thr-13, and Ser-14. A sn-glycerol 3-phosphate-binding site is contributed by Thr-12. Residue Arg-16 participates in ADP binding. Arg-82, Glu-83, Tyr-134, and Asp-243 together coordinate sn-glycerol 3-phosphate. Positions 82, 83, 134, 243, and 244 each coordinate glycerol. Positions 265 and 308 each coordinate ADP. Residues Thr-265, Gly-308, Gln-312, and Gly-408 each coordinate ATP. The ADP site is built by Gly-408 and Asn-412.

The protein belongs to the FGGY kinase family.

The catalysed reaction is glycerol + ATP = sn-glycerol 3-phosphate + ADP + H(+). It participates in polyol metabolism; glycerol degradation via glycerol kinase pathway; sn-glycerol 3-phosphate from glycerol: step 1/1. Its activity is regulated as follows. Inhibited by fructose 1,6-bisphosphate (FBP). Functionally, key enzyme in the regulation of glycerol uptake and metabolism. Catalyzes the phosphorylation of glycerol to yield sn-glycerol 3-phosphate. This is Glycerol kinase 1 from Pseudomonas aeruginosa (strain ATCC 15692 / DSM 22644 / CIP 104116 / JCM 14847 / LMG 12228 / 1C / PRS 101 / PAO1).